The sequence spans 124 residues: Large ribosomal subunit protein uL18 (124 aa).

Belongs to the universal ribosomal protein uL18 family. As to quaternary structure, part of the 50S ribosomal subunit; part of the 5S rRNA/L5/L18/L25 subcomplex. Contacts the 5S and 23S rRNAs.

This is one of the proteins that bind and probably mediate the attachment of the 5S RNA into the large ribosomal subunit, where it forms part of the central protuberance. The chain is Large ribosomal subunit protein uL18 from Aquifex aeolicus (strain VF5).